The following is a 250-amino-acid chain: GTP cyclohydrolase 1 type 2 homolog (250 aa).

H63, H64, D100, H218, and E222 together coordinate a divalent metal cation.

The protein belongs to the GTP cyclohydrolase I type 2/NIF3 family. Homohexamer.

In Pyrococcus abyssi (strain GE5 / Orsay), this protein is GTP cyclohydrolase 1 type 2 homolog.